The sequence spans 192 residues: Ciliary microtubule inner protein 3 (192 aa).

Residues 24–108 (RAGAEGGPSL…SGQKVKAPHR (85 aa)) form a disordered region. A compositionally biased stretch (basic residues) spans 55-64 (APRRPPRPRT).

The protein belongs to the CIMIP3-like family. As to expression, detected in the sperm flagellum (at protein level).

It is found in the cytoplasm. The protein localises to the cytoskeleton. The protein resides in the flagellum axoneme. The polypeptide is Ciliary microtubule inner protein 3 (Bos taurus (Bovine)).